We begin with the raw amino-acid sequence, 375 residues long: Arsenite methyltransferase (375 aa).

The residue at position 335 (serine 335) is a Phosphoserine.

This sequence belongs to the methyltransferase superfamily. Arsenite methyltransferase family.

Its subcellular location is the cytoplasm. It localises to the cytosol. It carries out the reaction arsenic triglutathione + [thioredoxin]-dithiol + S-adenosyl-L-methionine + 2 H2O = methylarsonous acid + [thioredoxin]-disulfide + 3 glutathione + S-adenosyl-L-homocysteine + H(+). The catalysed reaction is arsenic triglutathione + 2 [thioredoxin]-dithiol + 2 S-adenosyl-L-methionine + H2O = dimethylarsinous acid + 2 [thioredoxin]-disulfide + 3 glutathione + 2 S-adenosyl-L-homocysteine + 2 H(+). The enzyme catalyses arsenic triglutathione + 3 [thioredoxin]-dithiol + 3 S-adenosyl-L-methionine = trimethylarsine + 3 [thioredoxin]-disulfide + 3 glutathione + 3 S-adenosyl-L-homocysteine + 3 H(+). Functionally, catalyzes the transfer of a methyl group from AdoMet to trivalent arsenicals producing methylated and dimethylated arsenicals. It methylates arsenite to form methylarsonate, Me-AsO(3)H(2), which is reduced by methylarsonate reductase to methylarsonite, Me-As(OH)2. Methylarsonite is also a substrate and it is converted into the much less toxic compound dimethylarsinate (cacodylate), Me(2)As(O)-OH. This chain is Arsenite methyltransferase (AS3MT), found in Homo sapiens (Human).